A 143-amino-acid polypeptide reads, in one-letter code: Acyl carrier protein 3, chloroplastic (143 aa).

The N-terminal 60 residues, M1–C60, are a transit peptide targeting the chloroplast. Positions Q64 to V139 constitute a Carrier domain. An O-(pantetheine 4'-phosphoryl)serine modification is found at S99.

This sequence belongs to the acyl carrier protein (ACP) family. In terms of processing, 4'-phosphopantetheine is transferred from CoA to a specific serine of apo-ACP by acpS. This modification is essential for activity because fatty acids are bound in thioester linkage to the sulfhydryl of the prosthetic group.

The protein resides in the plastid. Its subcellular location is the chloroplast. It functions in the pathway lipid metabolism; fatty acid biosynthesis. In terms of biological role, carrier of the growing fatty acid chain in fatty acid biosynthesis. The protein is Acyl carrier protein 3, chloroplastic (ACL1.3) of Cuphea lanceolata (Cigar flower).